A 380-amino-acid polypeptide reads, in one-letter code: Cytochrome b (380 aa).

4 consecutive transmembrane segments (helical) span residues 34–54 (FGSL…LLAM), 78–99 (WLIR…YFHI), 114–134 (WNTG…GYVL), and 179–199 (FFAL…IHLT). Heme b-binding residues include H84 and H98. Residues H183 and H197 each contribute to the heme b site. An a ubiquinone-binding site is contributed by H202. A run of 4 helical transmembrane segments spans residues 227–247 (TKDI…ALFS), 289–309 (LGGV…PLLH), 321–341 (LSQL…WIGS), and 348–368 (FIII…ILFP).

This sequence belongs to the cytochrome b family. As to quaternary structure, the cytochrome bc1 complex contains 11 subunits: 3 respiratory subunits (MT-CYB, CYC1 and UQCRFS1), 2 core proteins (UQCRC1 and UQCRC2) and 6 low-molecular weight proteins (UQCRH/QCR6, UQCRB/QCR7, UQCRQ/QCR8, UQCR10/QCR9, UQCR11/QCR10 and a cleavage product of UQCRFS1). This cytochrome bc1 complex then forms a dimer. Heme b serves as cofactor.

Its subcellular location is the mitochondrion inner membrane. Functionally, component of the ubiquinol-cytochrome c reductase complex (complex III or cytochrome b-c1 complex) that is part of the mitochondrial respiratory chain. The b-c1 complex mediates electron transfer from ubiquinol to cytochrome c. Contributes to the generation of a proton gradient across the mitochondrial membrane that is then used for ATP synthesis. The polypeptide is Cytochrome b (MT-CYB) (Pygoscelis papua (Gentoo penguin)).